An 89-amino-acid polypeptide reads, in one-letter code: Acyl carrier protein MbtL (89 aa).

One can recognise a Carrier domain in the interval 7–82; the sequence is ESVSAALTEI…DLEAAIQAKV (76 aa). Serine 42 is modified (O-(pantetheine 4'-phosphoryl)serine).

In terms of processing, 4'-phosphopantetheine is transferred from CoA to a specific serine of apo-ACP, leading to the activated holo-ACP form.

It localises to the cytoplasm. The protein operates within siderophore biosynthesis; mycobactin biosynthesis. Acyl carrier protein involved in the formation of acyl-S-ACP intermediates within the mycobactin biosynthesis process. This is Acyl carrier protein MbtL (mbtL) from Mycobacterium sp. (strain MCS).